Reading from the N-terminus, the 217-residue chain is Rhicadhesin receptor (217 aa).

The signal sequence occupies residues 1 to 20 (MKLIAVLLLVVLATATTATA). Cys30 and Cys45 are disulfide-bonded. N-linked (GlcNAc...) asparagine glycosylation is found at Asn50 and Asn68. In terms of domain architecture, Cupin type-1 spans 58–207 (SNLLVKQGAT…AFQIGTKEVQ (150 aa)). Residues His107, His109, Glu114, and His153 each contribute to the Mn(2+) site.

The protein belongs to the germin family. Post-translationally, glycosylated.

The protein resides in the secreted. It localises to the extracellular space. It is found in the apoplast. Its subcellular location is the cell wall. In terms of biological role, putative receptor for bacterial rhicadhesin, an attachment protein of rhizobiaceae. The polypeptide is Rhicadhesin receptor (GER1) (Pisum sativum (Garden pea)).